The chain runs to 306 residues: Putative secretory carrier-associated membrane protein 1 (306 aa).

Residues 1–60 are disordered; it reads MAGRYDSNPFEEDDVNPFSEQARGKAGGQPSYGGGAFYMPNPRNVPSMSSNSRLSPLPPE. Topologically, residues 1–141 are cytoplasmic; that stretch reads MAGRYDSNPF…EIPSHLQRMQ (141 aa). Over residues 25–36 the composition is skewed to gly residues; that stretch reads KAGGQPSYGGGA. The segment covering 44–54 has biased composition (polar residues); the sequence is NVPSMSSNSRL. A coiled-coil region spans residues 72–109; that stretch reads LDSSKDLKNREKELQAREAELNKREKELKRREEAAARA. The next 4 helical transmembrane spans lie at 142 to 162, 174 to 194, 209 to 229, and 257 to 277; these read YVAF…VIAV, IWLL…VLWY, FGLF…SAVA, and IFYF…IWVI. At 278-306 the chain is on the cytoplasmic side; the sequence is QQVYMYFRGSGKAAEMKRDATRGAMRAAF.

This sequence belongs to the SCAMP family.

Its subcellular location is the cell membrane. It is found in the cytoplasmic vesicle. It localises to the secretory vesicle membrane. In terms of biological role, probably involved in membrane trafficking. This Oryza sativa subsp. indica (Rice) protein is Putative secretory carrier-associated membrane protein 1 (SCAMP1).